Here is a 51-residue protein sequence, read N- to C-terminus: Large ribosomal subunit protein bL33 (51 aa).

The disordered stretch occupies residues 1–23 (MRDKIKLESSAGTGHFYTTTKNK). The segment covering 10-20 (SAGTGHFYTTT) has biased composition (polar residues).

It belongs to the bacterial ribosomal protein bL33 family.

This is Large ribosomal subunit protein bL33 from Chromobacterium violaceum (strain ATCC 12472 / DSM 30191 / JCM 1249 / CCUG 213 / NBRC 12614 / NCIMB 9131 / NCTC 9757 / MK).